Here is a 394-residue protein sequence, read N- to C-terminus: Elongation factor Tu (394 aa).

The tr-type G domain maps to 10–204 (KPHVNIGTIG…AVDSYIPQPV (195 aa)). The segment at 19-26 (GHVDHGKT) is G1. A GTP-binding site is contributed by 19–26 (GHVDHGKT). Threonine 26 is a binding site for Mg(2+). Residues 60-64 (GITIS) are G2. Residues 81 to 84 (DCPG) are G3. GTP-binding positions include 81-85 (DCPGH) and 136-139 (NKVD). The segment at 136–139 (NKVD) is G4. The interval 174 to 176 (SAL) is G5.

Belongs to the TRAFAC class translation factor GTPase superfamily. Classic translation factor GTPase family. EF-Tu/EF-1A subfamily. Monomer.

It is found in the cytoplasm. It catalyses the reaction GTP + H2O = GDP + phosphate + H(+). In terms of biological role, GTP hydrolase that promotes the GTP-dependent binding of aminoacyl-tRNA to the A-site of ribosomes during protein biosynthesis. This is Elongation factor Tu from Rickettsia montanensis.